The sequence spans 232 residues: 2,3-bisphosphoglycerate-dependent phosphoglycerate mutase 1 (232 aa).

Substrate is bound by residues 8–15, 21–22, R58, 114–117, K125, 141–142, and 185–186; these read RHGQSLWN, TG, ERYY, RR, and GN. H9 serves as the catalytic Tele-phosphohistidine intermediate. E114 acts as the Proton donor/acceptor in catalysis.

This sequence belongs to the phosphoglycerate mutase family. BPG-dependent PGAM subfamily.

The enzyme catalyses (2R)-2-phosphoglycerate = (2R)-3-phosphoglycerate. It functions in the pathway carbohydrate degradation; glycolysis; pyruvate from D-glyceraldehyde 3-phosphate: step 3/5. Catalyzes the interconversion of 2-phosphoglycerate and 3-phosphoglycerate. This chain is 2,3-bisphosphoglycerate-dependent phosphoglycerate mutase 1, found in Gloeobacter violaceus (strain ATCC 29082 / PCC 7421).